The chain runs to 97 residues: Integration host factor subunit alpha (97 aa).

The segment at 50–71 (FGNFTLRDKPQRPGRNPKTGEE) is disordered.

Belongs to the bacterial histone-like protein family. As to quaternary structure, heterodimer of an alpha and a beta chain.

Functionally, this protein is one of the two subunits of integration host factor, a specific DNA-binding protein that functions in genetic recombination as well as in transcriptional and translational control. The sequence is that of Integration host factor subunit alpha from Legionella pneumophila (strain Paris).